A 174-amino-acid chain; its full sequence is MXVNFDETSKNNDKLSNNITDWQQNIEKSATSFLNHFIRISPKQNSNKKELLAPNQDIYLRENIRLRLQLAIMAVPRQQNELYKQSLEAVSSWVRSYFDTNAEVTQNFLKLVDGLTDTSIYVDVPEQLKSLTLLDKYLNRTALDVQKVEIEADKAIDTMPQVEAVKPTQSESQQ.

It to E.coli HemX C-terminal region.

This is an uncharacterized protein from Haemophilus influenzae (strain ATCC 51907 / DSM 11121 / KW20 / Rd).